The following is a 503-amino-acid chain: Lysine--tRNA ligase (503 aa).

2 residues coordinate Mg(2+): Glu-414 and Glu-421.

This sequence belongs to the class-II aminoacyl-tRNA synthetase family. Homodimer. It depends on Mg(2+) as a cofactor.

The protein localises to the cytoplasm. The catalysed reaction is tRNA(Lys) + L-lysine + ATP = L-lysyl-tRNA(Lys) + AMP + diphosphate. The polypeptide is Lysine--tRNA ligase (Neisseria meningitidis serogroup A / serotype 4A (strain DSM 15465 / Z2491)).